Reading from the N-terminus, the 202-residue chain is MREAMQLVPMVIEQSSRGERSFDIYSRLLRERIIFLNGEVNDTVSALVCAQLLFLEADPEKPINLYINSPGGAVTSGLAMYDTMRFIRAPVHTLCMGTARSMGSFLLMAGEPGERAALPNASILIHQPSGGFQGQASDMLIHAEEILKTKQRMTRLYAEHCGRSYEDFERGMDRDRFMTAEEALEWGLIERILKVREDTSSL.

Serine 101 (nucleophile) is an active-site residue. The active site involves histidine 126.

The protein belongs to the peptidase S14 family. Fourteen ClpP subunits assemble into 2 heptameric rings which stack back to back to give a disk-like structure with a central cavity, resembling the structure of eukaryotic proteasomes.

The protein localises to the cytoplasm. It catalyses the reaction Hydrolysis of proteins to small peptides in the presence of ATP and magnesium. alpha-casein is the usual test substrate. In the absence of ATP, only oligopeptides shorter than five residues are hydrolyzed (such as succinyl-Leu-Tyr-|-NHMec, and Leu-Tyr-Leu-|-Tyr-Trp, in which cleavage of the -Tyr-|-Leu- and -Tyr-|-Trp bonds also occurs).. Its function is as follows. Cleaves peptides in various proteins in a process that requires ATP hydrolysis. Has a chymotrypsin-like activity. Plays a major role in the degradation of misfolded proteins. This chain is ATP-dependent Clp protease proteolytic subunit 1, found in Rhizobium etli (strain ATCC 51251 / DSM 11541 / JCM 21823 / NBRC 15573 / CFN 42).